Consider the following 310-residue polypeptide: Phosphoribosylaminoimidazole-succinocarboxamide synthase (310 aa).

Belongs to the SAICAR synthetase family.

The enzyme catalyses 5-amino-1-(5-phospho-D-ribosyl)imidazole-4-carboxylate + L-aspartate + ATP = (2S)-2-[5-amino-1-(5-phospho-beta-D-ribosyl)imidazole-4-carboxamido]succinate + ADP + phosphate + 2 H(+). The protein operates within purine metabolism; IMP biosynthesis via de novo pathway; 5-amino-1-(5-phospho-D-ribosyl)imidazole-4-carboxamide from 5-amino-1-(5-phospho-D-ribosyl)imidazole-4-carboxylate: step 1/2. The chain is Phosphoribosylaminoimidazole-succinocarboxamide synthase from Xanthomonas campestris pv. campestris (strain B100).